The chain runs to 980 residues: Glutamate receptor ionotropic, kainate 5 (980 aa).

Residues 1–14 (MPAELLLLLIVAFA) form the signal peptide. Residues 15–544 (SPSCQVLSSL…YFSFLDPFSP (530 aa)) are Extracellular-facing. 3 disulfides stabilise this stretch: cysteine 36–cysteine 292, cysteine 83–cysteine 334, and cysteine 165–cysteine 170. N-linked (GlcNAc...) asparagine glycosylation is found at asparagine 219, asparagine 271, asparagine 285, asparagine 322, asparagine 372, asparagine 394, asparagine 400, asparagine 407, asparagine 414, and asparagine 478. A helical transmembrane segment spans residues 545–565 (AVWLFMLLAYLAVSCVLFLAA). The Cytoplasmic portion of the chain corresponds to 566–622 (RLSPYEWYNPHPCLRARPHILENQYTLGNSLWFPVGGFMQQGSEIMPRALSTRCVSG). The helical transmembrane segment at 623 to 643 (VWWAFTLIIISSYTANLAAFL) threads the bilayer. Topologically, residues 644–803 (TVQRMEVPVE…HRAKGLGMEN (160 aa)) are extracellular. A glycan (N-linked (GlcNAc...) asparagine) is linked at asparagine 735. The helical transmembrane segment at 804-824 (IGGIFIVLICGLIIAVFVAVM) threads the bilayer. Residues 825–980 (EFIWSTRRSA…AGPRELAEHE (156 aa)) lie on the Cytoplasmic side of the membrane. 2 disordered regions span residues 891-927 (YSAG…PTPC) and 944-980 (ASGA…AEHE). Residues 894 to 903 (GAGGDAGSAH) show a composition bias toward gly residues.

It belongs to the glutamate-gated ion channel (TC 1.A.10.1) family. GRIK5 subfamily. In terms of assembly, homotetramer. Heterotetramer with GRIK2. Can form functional heteromeric receptors with GRIK1 and GRIK2. Can form functional heteromeric receptors with GRIK3.

The protein resides in the cell membrane. It localises to the postsynaptic cell membrane. Its subcellular location is the presynaptic cell membrane. Ionotropic glutamate receptor that functions as a cation-permeable ligand-gated ion channel, gated by L-glutamate and the glutamatergic agonist kainic acid. Cannot form functional channels on its own and produces channel activity only in heteromeric assembly with GRIK1 and GRIK2 subunits. Can form functional heteromeric receptors with GRIK3. The sequence is that of Glutamate receptor ionotropic, kainate 5 (GRIK5) from Homo sapiens (Human).